The following is a 216-amino-acid chain: GTP cyclohydrolase 1 (216 aa).

Positions 108, 111, and 179 each coordinate Zn(2+).

This sequence belongs to the GTP cyclohydrolase I family. As to quaternary structure, toroid-shaped homodecamer, composed of two pentamers of five dimers.

It carries out the reaction GTP + H2O = 7,8-dihydroneopterin 3'-triphosphate + formate + H(+). The protein operates within cofactor biosynthesis; 7,8-dihydroneopterin triphosphate biosynthesis; 7,8-dihydroneopterin triphosphate from GTP: step 1/1. The sequence is that of GTP cyclohydrolase 1 from Shewanella sp. (strain MR-7).